Here is a 425-residue protein sequence, read N- to C-terminus: UPF0597 protein VF_0641 (425 aa).

The protein belongs to the UPF0597 family.

This Aliivibrio fischeri (strain ATCC 700601 / ES114) (Vibrio fischeri) protein is UPF0597 protein VF_0641.